Reading from the N-terminus, the 442-residue chain is NADH-quinone oxidoreductase subunit D (442 aa).

This sequence belongs to the complex I 49 kDa subunit family. NDH-1 is composed of 14 different subunits. Subunits NuoB, C, D, E, F, and G constitute the peripheral sector of the complex.

It localises to the cell membrane. The enzyme catalyses a quinone + NADH + 5 H(+)(in) = a quinol + NAD(+) + 4 H(+)(out). Functionally, NDH-1 shuttles electrons from NADH, via FMN and iron-sulfur (Fe-S) centers, to quinones in the respiratory chain. The immediate electron acceptor for the enzyme in this species is believed to be a menaquinone. Couples the redox reaction to proton translocation (for every two electrons transferred, four hydrogen ions are translocated across the cytoplasmic membrane), and thus conserves the redox energy in a proton gradient. This is NADH-quinone oxidoreductase subunit D from Mycolicibacterium vanbaalenii (strain DSM 7251 / JCM 13017 / BCRC 16820 / KCTC 9966 / NRRL B-24157 / PYR-1) (Mycobacterium vanbaalenii).